The primary structure comprises 401 residues: Probable tRNA sulfurtransferase (401 aa).

Residues 60-165 (EPIIDKLKNV…QEGTYITCHD (106 aa)) enclose the THUMP domain. Residues 183–184 (ML), 208–209 (HF), Arg-265, Gly-287, and Gln-296 each bind ATP.

The protein belongs to the ThiI family.

It is found in the cytoplasm. The catalysed reaction is [ThiI sulfur-carrier protein]-S-sulfanyl-L-cysteine + a uridine in tRNA + 2 reduced [2Fe-2S]-[ferredoxin] + ATP + H(+) = [ThiI sulfur-carrier protein]-L-cysteine + a 4-thiouridine in tRNA + 2 oxidized [2Fe-2S]-[ferredoxin] + AMP + diphosphate. The enzyme catalyses [ThiS sulfur-carrier protein]-C-terminal Gly-Gly-AMP + S-sulfanyl-L-cysteinyl-[cysteine desulfurase] + AH2 = [ThiS sulfur-carrier protein]-C-terminal-Gly-aminoethanethioate + L-cysteinyl-[cysteine desulfurase] + A + AMP + 2 H(+). It functions in the pathway cofactor biosynthesis; thiamine diphosphate biosynthesis. In terms of biological role, catalyzes the ATP-dependent transfer of a sulfur to tRNA to produce 4-thiouridine in position 8 of tRNAs, which functions as a near-UV photosensor. Also catalyzes the transfer of sulfur to the sulfur carrier protein ThiS, forming ThiS-thiocarboxylate. This is a step in the synthesis of thiazole, in the thiamine biosynthesis pathway. The sulfur is donated as persulfide by IscS. In Geobacillus sp. (strain WCH70), this protein is Probable tRNA sulfurtransferase.